The following is a 589-amino-acid chain: MKKTKIVSTLGPASDDIETITKLAEAGANVFRFNFSHGNHEEHLARMNMVREVEKKTGKLLGIALDTKGAEIRTTDQEGGKFTINTGDEIRVSMDATKAGNKDMIHVTYPGLFDDTHVGGTVLIDDGAVGLTIKAKDEEKRELVCEAQNTGVIGSKKGVNAPGVEIRLPGITEKDTDDIRFGLKHGINFIFASFVRKAQDVLDIRALCEEANASYVKIFPKIESQEGIDNIDEILQVSDGLMVARGDMGVEIPFINVPFVQKTLIKKCNALGKPVITATQMLDSMQENPRPTRAEVTDVANAVLDGTDATMLSGESANGLYPVQSVQAMHDIDVRTEKELDTRNTLALQRFEEYKGSNVTEAIGESVVRTAQELGVKTIIAATSSGYTARMISKYRPDATIVALTFDEKIQHSLGIVWGVEPVLAKKPSNTDEMFEEAARVAKEHGFVKDGDLVIIVAGVPFGQSGTTNLMKLQIIGNQLAQGLGVGTGSVIGKAVVANSAEEANAKVHEGDILVAKTTDKDYMPAIKKASGMIVEASGLTSHAAVVGVSLGIPVVVGVADATSKIADGSTLTVDARRGAIYQGEVSNL.

Arginine 32 serves as a coordination point for substrate. 4 residues coordinate K(+): asparagine 34, serine 36, aspartate 66, and threonine 67. An ATP-binding site is contributed by 34-37 (NFSH). ATP-binding residues include arginine 73 and lysine 157. A Mg(2+)-binding site is contributed by glutamate 223. 3 residues coordinate substrate: glycine 246, aspartate 247, and threonine 279. A Mg(2+)-binding site is contributed by aspartate 247.

This sequence belongs to the pyruvate kinase family. The protein in the C-terminal section; belongs to the PEP-utilizing enzyme family. In terms of assembly, homotetramer. Requires Mg(2+) as cofactor. K(+) is required as a cofactor.

The enzyme catalyses pyruvate + ATP = phosphoenolpyruvate + ADP + H(+). The protein operates within carbohydrate degradation; glycolysis; pyruvate from D-glyceraldehyde 3-phosphate: step 5/5. Its activity is regulated as follows. Strongly activated by glucose-6-phosphate, ribose-5-phosphate and fructose-6-phosphate. Weak activator AMP and weak inhibitor fructose-1,6-bisphosphate can act as strong inhibitors in the presence of strong activators. This is Pyruvate kinase (pyk) from Lactobacillus delbrueckii subsp. bulgaricus.